The sequence spans 559 residues: MAFSLRENPRLLNCLDSDIPALSTCSNADAFCRMNTMLGNSLDLSGVCTTPTAKCKRDPFNDRPDSDLSAVRSRMLFPSGGQDSSRGLPDVNNWGLGLQSLSLSDWERPWSSHDTDPSVKTNTASLQGILGTPSQLTNKLSNYSDSSIGATDFLEKFPGMARLNSQSFLDSHSISPVDSETSGFSSGSDHLSDLLSSLRISPSVPFLMSSMQRDPLKLALDSRMDHSSSPLTPPPSASPSGSLSHRWPGASIWPSWDLMKTPESPFSIEREAWLHRQAASINEATFTWSGQLPPRHYQNPVYSCKVFLGGVPWDITEAGLINTFKCYGPLSVEWPGKDGKHPRCPPKGNMPKGYVYLVFESDKSVRALLQDCTEDLLHPEGYSEYYFKMSSRRMRCKDAQVIPWVISDSNYVSCPSQRLDPRNTVFVGALHGMLNAEALASIMNDLFGGVVYAGIDTDKHKYPIGSGRVTFNNQRSYLKAVSAAFVEIKTPKFTKKVQIDPYLEDAICQSCSREPGPFFCRDKTCFKYYCRSCWHRQHSMDILSNHRPLMRNQKKRDAN.

The interval 222–243 is disordered; that stretch reads SRMDHSSSPLTPPPSASPSGSL. RRM domains are found at residues 304–401 and 423–504; these read CKVF…DAQV and NTVF…PYLE. Residues cysteine 508, cysteine 511, cysteine 520, cysteine 525, cysteine 530, cysteine 533, histidine 538, and histidine 546 each contribute to the Zn(2+) site.

The protein belongs to the RRM CPEB family. In terms of tissue distribution, expressed in oocytes (at protein level). During oocyte maturation becomes detectable at stage Ib, and remains ubiquitously distributed within the oocyte cytoplasm until stage II. It then follows a gradual accumulation to the future animal pole during stage III, and remains localized to this pole at stage IV (at protein level). Expressed in oocytes, blastomeres and pre-mid-blastula transition embryos. Its expression during oogenesis is ubiquitous at stages I and II, but gradually accumulated at the periphery of the oocyte in the presumptive animal pole during stage III. Expression was maintained in that region at stage IV, and then became delocalized at stage V to cover a much broader area presumably encompassing the future blastodisc.

It is found in the cytoplasm. Functionally, sequence-specific RNA-binding protein that regulates mRNA cytoplasmic polyadenylation and translation initiation during oocyte maturation and early development. Binds to the cytoplasmic polyadenylation element (CPE), an uridine-rich sequence element (consensus sequence 5'-UUUUUAU-3') within the mRNA 3'-UTR. In Danio rerio (Zebrafish), this protein is Cytoplasmic polyadenylation element-binding protein 1 (cpeb1).